Consider the following 971-residue polypeptide: Kinesin-like protein KIN-6 (971 aa).

Disordered regions lie at residues 1 to 44 and 93 to 121; these read MEEK…SSLA and TTTT…RNPE. The segment covering 29–39 has biased composition (low complexity); that stretch reads ATPFTTTTKPP. One can recognise a Kinesin motor domain in the interval 76–460; sequence SLKIFLRIKP…LRQASPYMKI (385 aa). 202-209 provides a ligand contact to ATP; that stretch reads GPSGSGKT. Basic and acidic residues predominate over residues 700–709; that stretch reads RREAGSEESS. Disordered stretches follow at residues 700–856 and 872–917; these read RREA…TEEM and KTTN…RLQP. A compositionally biased stretch (polar residues) spans 768–783; that stretch reads QSVNSEENVGIPSTIT. Residues 785–797 are compositionally biased toward basic and acidic residues; sequence VEAEVTDFQRDQN. A compositionally biased stretch (polar residues) spans 809 to 827; it reads EVSQDCINSGLSNVQTKSA. Over residues 831–842 the composition is skewed to basic and acidic residues; it reads RFPDSEKQERNR. Positions 903–915 are enriched in basic residues; the sequence is KKQKNGQKPKRRL.

This sequence belongs to the TRAFAC class myosin-kinesin ATPase superfamily. Kinesin family. KIN-6 subfamily.

The chain is Kinesin-like protein KIN-6 from Arabidopsis thaliana (Mouse-ear cress).